The chain runs to 186 residues: Probable chorismate pyruvate-lyase (186 aa).

Substrate contacts are provided by R77, L115, and E174.

The protein belongs to the UbiC family.

It is found in the cytoplasm. The catalysed reaction is chorismate = 4-hydroxybenzoate + pyruvate. The protein operates within cofactor biosynthesis; ubiquinone biosynthesis. Functionally, removes the pyruvyl group from chorismate, with concomitant aromatization of the ring, to provide 4-hydroxybenzoate (4HB) for the ubiquinone pathway. The protein is Probable chorismate pyruvate-lyase of Shewanella sp. (strain W3-18-1).